The following is a 155-amino-acid chain: Ribosome maturation factor RimP (155 aa).

This sequence belongs to the RimP family.

It is found in the cytoplasm. Required for maturation of 30S ribosomal subunits. This Prochlorococcus marinus (strain AS9601) protein is Ribosome maturation factor RimP.